Reading from the N-terminus, the 744-residue chain is Phosphoribosylformylglycinamidine synthase subunit PurL (744 aa).

Residue His-50 is part of the active site. The ATP site is built by Tyr-53 and Lys-92. Residue Glu-94 coordinates Mg(2+). Residues 95–98 and Arg-117 each bind substrate; that span reads SHNH. His-96 (proton acceptor) is an active-site residue. Asp-118 serves as a coordination point for Mg(2+). Gln-241 is a binding site for substrate. A Mg(2+)-binding site is contributed by Asp-269. 313 to 315 is a substrate binding site; the sequence is ESQ. Residues Asp-494 and Gly-531 each coordinate ATP. Asn-532 serves as a coordination point for Mg(2+). Ser-534 contacts substrate.

It belongs to the FGAMS family. Monomer. Part of the FGAM synthase complex composed of 1 PurL, 1 PurQ and 2 PurS subunits.

The protein localises to the cytoplasm. The enzyme catalyses N(2)-formyl-N(1)-(5-phospho-beta-D-ribosyl)glycinamide + L-glutamine + ATP + H2O = 2-formamido-N(1)-(5-O-phospho-beta-D-ribosyl)acetamidine + L-glutamate + ADP + phosphate + H(+). The protein operates within purine metabolism; IMP biosynthesis via de novo pathway; 5-amino-1-(5-phospho-D-ribosyl)imidazole from N(2)-formyl-N(1)-(5-phospho-D-ribosyl)glycinamide: step 1/2. In terms of biological role, part of the phosphoribosylformylglycinamidine synthase complex involved in the purines biosynthetic pathway. Catalyzes the ATP-dependent conversion of formylglycinamide ribonucleotide (FGAR) and glutamine to yield formylglycinamidine ribonucleotide (FGAM) and glutamate. The FGAM synthase complex is composed of three subunits. PurQ produces an ammonia molecule by converting glutamine to glutamate. PurL transfers the ammonia molecule to FGAR to form FGAM in an ATP-dependent manner. PurS interacts with PurQ and PurL and is thought to assist in the transfer of the ammonia molecule from PurQ to PurL. This Chelativorans sp. (strain BNC1) protein is Phosphoribosylformylglycinamidine synthase subunit PurL.